Consider the following 300-residue polypeptide: Junctional adhesion molecule A (300 aa).

Positions 1–26 (MGTEGKAGSKLLFLFTSMILGSLVQG) are cleaved as a signal peptide. The Extracellular segment spans residues 27-238 (KGSVYSPQTA…MEAVELNVGG (212 aa)). Ig-like V-type domains follow at residues 28–122 (GSVY…GEVS) and 134–228 (PTVS…EAVR). 2 cysteine pairs are disulfide-bonded: Cys-49-Cys-108 and Cys-152-Cys-212. N-linked (GlcNAc...) asparagine glycosylation occurs at Asn-185. Residues 239 to 259 (IVAAVLVTLILLGLLIFGIWF) traverse the membrane as a helical segment. The Cytoplasmic segment spans residues 260–300 (AYSRGYFERTKKGTAPGKKVIYSQPSARSEGEFKQTSSFLV). Residues Ser-282, Ser-285, and Ser-288 each carry the phosphoserine modification.

Belongs to the immunoglobulin superfamily. In terms of assembly, interacts with the ninth PDZ domain of MPDZ. Interacts with the first PDZ domain of PARD3. The association between PARD3 and PARD6B probably disrupts this interaction. Interacts with ITGAL (via I-domain). Interacts with CD151. In terms of processing, N-glycosylated.

It is found in the cell junction. Its subcellular location is the tight junction. It localises to the cell membrane. In terms of biological role, seems to play a role in epithelial tight junction formation. Appears early in primordial forms of cell junctions and recruits PARD3. The association of the PARD6-PARD3 complex may prevent the interaction of PARD3 with JAM1, thereby preventing tight junction assembly. Plays a role in regulating monocyte transmigration involved in integrity of epithelial barrier. Ligand for integrin alpha-L/beta-2 involved in memory T-cell and neutrophil transmigration. This chain is Junctional adhesion molecule A (F11r), found in Rattus norvegicus (Rat).